A 577-amino-acid polypeptide reads, in one-letter code: Thiol:disulfide interchange protein DsbD (577 aa).

A signal peptide spans 1–23 (MAQRIFTLIFLLWTAVGTPQVAA). 2 cysteine pairs are disulfide-bonded: C131–C137 and C194–C316. The next 7 helical transmembrane spans lie at 182-202 (ALLI…YPLI), 225-245 (YVQG…AAGL), 255-275 (YILI…FGLY), 308-328 (LAGL…LLYI), 338-358 (GGTL…VTLF), 369-389 (WMQY…VFLL), and 396-416 (AWGI…ALML). Positions 437–577 (VISAKPLQDW…FQAHLQKFSP (141 aa)) constitute a Thioredoxin domain. A disulfide bond links C492 and C495.

This sequence belongs to the thioredoxin family. DsbD subfamily.

Its subcellular location is the cell inner membrane. It carries out the reaction [protein]-dithiol + NAD(+) = [protein]-disulfide + NADH + H(+). The catalysed reaction is [protein]-dithiol + NADP(+) = [protein]-disulfide + NADPH + H(+). Functionally, required to facilitate the formation of correct disulfide bonds in some periplasmic proteins and for the assembly of the periplasmic c-type cytochromes. Acts by transferring electrons from cytoplasmic thioredoxin to the periplasm. This transfer involves a cascade of disulfide bond formation and reduction steps. The chain is Thiol:disulfide interchange protein DsbD from Pectobacterium atrosepticum (strain SCRI 1043 / ATCC BAA-672) (Erwinia carotovora subsp. atroseptica).